The sequence spans 116 residues: Large ribosomal subunit protein uL22 (116 aa).

Belongs to the universal ribosomal protein uL22 family. As to quaternary structure, part of the 50S ribosomal subunit.

This protein binds specifically to 23S rRNA; its binding is stimulated by other ribosomal proteins, e.g. L4, L17, and L20. It is important during the early stages of 50S assembly. It makes multiple contacts with different domains of the 23S rRNA in the assembled 50S subunit and ribosome. Functionally, the globular domain of the protein is located near the polypeptide exit tunnel on the outside of the subunit, while an extended beta-hairpin is found that lines the wall of the exit tunnel in the center of the 70S ribosome. The chain is Large ribosomal subunit protein uL22 from Sulfurihydrogenibium sp. (strain YO3AOP1).